The chain runs to 42 residues: Beta-defensin 13 (42 aa).

3 disulfide bridges follow: C9–C38, C16–C31, and C21–C39.

Belongs to the beta-defensin family. As to expression, neutrophilic granules.

Its subcellular location is the secreted. In terms of biological role, has bactericidal activity. Active against E.coli ML35 and S.aureus 502A. The sequence is that of Beta-defensin 13 (DEFB13) from Bos taurus (Bovine).